The primary structure comprises 178 residues: Large ribosomal subunit protein uL6 (178 aa).

The protein belongs to the universal ribosomal protein uL6 family. In terms of assembly, part of the 50S ribosomal subunit.

Functionally, this protein binds to the 23S rRNA, and is important in its secondary structure. It is located near the subunit interface in the base of the L7/L12 stalk, and near the tRNA binding site of the peptidyltransferase center. The chain is Large ribosomal subunit protein uL6 from Staphylococcus carnosus (strain TM300).